The following is a 249-amino-acid chain: Cis-4-hydroxycyclohexanecarboxylate dehydrogenase (249 aa).

NAD(+)-binding residues include Asp-38, Asp-63, Val-64, Asn-90, Tyr-156, Lys-160, Ala-189, and Thr-191. The active-site Proton acceptor is the Tyr-156.

It belongs to the short-chain dehydrogenases/reductases (SDR) family. Homotetramer.

It catalyses the reaction cis-4-hydroxycyclohexane-1-carboxylate + NAD(+) = 4-oxocyclohexane-1-carboxylate + NADH + H(+). In terms of biological role, dehydrogenase involved in a cyclohexanecarboxylate (CHCA) degradation pathway. Catalyzes the NAD(+)-dependent dehydrogenation of cis-4-hydroxycyclohexanecarboxylate (cis-4-hydroxyCHCA) to form 4-oxocyclohexanecarboxylate (4-oxoCHCA). Is highly specific for the cis-4-hydroxy derivative and shows only weak activity with trans-4-hydroxyCHCA. Cannot use NADP(+). The protein is Cis-4-hydroxycyclohexanecarboxylate dehydrogenase of Sinomonas cyclohexanicum (Corynebacterium cyclohexanicum).